The following is a 551-amino-acid chain: Probable alpha-glucosidase (551 aa).

The active-site Nucleophile is the Asp-212. The active-site Proton donor is the Glu-272.

Belongs to the glycosyl hydrolase 13 family.

It catalyses the reaction Hydrolysis of terminal, non-reducing (1-&gt;4)-linked alpha-D-glucose residues with release of alpha-D-glucose.. The polypeptide is Probable alpha-glucosidase (aglA) (Rhizobium meliloti (strain 1021) (Ensifer meliloti)).